The primary structure comprises 375 residues: Trichodiene synthase (375 aa).

Belongs to the trichodiene synthase family.

It carries out the reaction (2E,6E)-farnesyl diphosphate = trichodiene + diphosphate. It functions in the pathway sesquiterpene biosynthesis; trichothecene biosynthesis. TS is a member of the terpene cyclase group of enzymes. It catalyzes the isomerization and cyclization of farnesyl pyro-phosphate to form trichodiene, the first cyclic intermediate in the biosynthetic pathway for trichothecenes. It serves to branch trichothecene biosynthesis from the isoprenoid pathway. In Fusarium cerealis (Fusarium crookwellense), this protein is Trichodiene synthase (TRI5).